Consider the following 42-residue polypeptide: Crotamine Ile-19 (42 aa).

Intrachain disulfides connect Cys-4-Cys-36, Cys-11-Cys-30, and Cys-18-Cys-37.

Belongs to the crotamine-myotoxin family. As to quaternary structure, monomer. Expressed by the venom gland.

The protein localises to the secreted. Functionally, cationic peptide that possesses multiple functions. It acts as a cell-penetrating peptide (CPP), and as a potent voltage-gated potassium channel (Kv) inhibitor, it induces severe muscle necrosis by a non-enzymatic mechanism and exhibits antimicrobial activities. It also elicits a short-lasting hyperextension of the hind limb. It does not cause observable tissue damage (whereas the whole venom causes severe myonecrosis accompanied by edema and hemorrhage). This chain is Crotamine Ile-19, found in Crotalus durissus ruruima (South American rattlesnake).